The following is a 348-amino-acid chain: Alanine racemase (348 aa).

Lys34 serves as the catalytic Proton acceptor; specific for D-alanine. Lys34 bears the N6-(pyridoxal phosphate)lysine mark. Arg127 is a substrate binding site. The Proton acceptor; specific for L-alanine role is filled by Tyr243. Met291 contributes to the substrate binding site.

It belongs to the alanine racemase family. Pyridoxal 5'-phosphate serves as cofactor.

The enzyme catalyses L-alanine = D-alanine. It participates in amino-acid biosynthesis; D-alanine biosynthesis; D-alanine from L-alanine: step 1/1. Catalyzes the interconversion of L-alanine and D-alanine. May also act on other amino acids. The polypeptide is Alanine racemase (alr) (Coprothermobacter proteolyticus (strain ATCC 35245 / DSM 5265 / OCM 4 / BT)).